We begin with the raw amino-acid sequence, 250 residues long: tRNA (guanine-N(1)-)-methyltransferase (250 aa).

S-adenosyl-L-methionine contacts are provided by residues Gly116 and Ile136–Leu141.

The protein belongs to the RNA methyltransferase TrmD family. In terms of assembly, homodimer.

The protein resides in the cytoplasm. The catalysed reaction is guanosine(37) in tRNA + S-adenosyl-L-methionine = N(1)-methylguanosine(37) in tRNA + S-adenosyl-L-homocysteine + H(+). Functionally, specifically methylates guanosine-37 in various tRNAs. The chain is tRNA (guanine-N(1)-)-methyltransferase from Pseudomonas putida (strain ATCC 47054 / DSM 6125 / CFBP 8728 / NCIMB 11950 / KT2440).